A 61-amino-acid polypeptide reads, in one-letter code: Small ribosomal subunit protein uS14 (61 aa).

Zn(2+) contacts are provided by Cys24, Cys27, Cys40, and Cys43.

Belongs to the universal ribosomal protein uS14 family. Zinc-binding uS14 subfamily. In terms of assembly, part of the 30S ribosomal subunit. Contacts proteins S3 and S10. Zn(2+) serves as cofactor.

Binds 16S rRNA, required for the assembly of 30S particles and may also be responsible for determining the conformation of the 16S rRNA at the A site. The chain is Small ribosomal subunit protein uS14 from Helicobacter pylori (strain J99 / ATCC 700824) (Campylobacter pylori J99).